Consider the following 234-residue polypeptide: Transcriptional activator protein TraR (234 aa).

The region spanning 167–232 is the HTH luxR-type domain; sequence TAEDAAWLDP…HLTALAIRRK (66 aa). A DNA-binding region (H-T-H motif) is located at residues 191 to 210; that stretch reads MEEIADVEGVKYNSVRVKLR.

The protein belongs to the autoinducer-regulated transcriptional regulatory protein family.

Its function is as follows. Positive regulation of conjugal transfer of Ti plasmids. TraR activates target genes in the presence of AAI and also activates traR and traI themselves. The polypeptide is Transcriptional activator protein TraR (traR) (Rhizobium radiobacter (Agrobacterium tumefaciens)).